Here is a 94-residue protein sequence, read N- to C-terminus: Large ribosomal subunit protein eL31 (94 aa).

This sequence belongs to the eukaryotic ribosomal protein eL31 family.

The protein is Large ribosomal subunit protein eL31 (rpl31e) of Pyrococcus abyssi (strain GE5 / Orsay).